The following is a 198-amino-acid chain: Glycerol-3-phosphate acyltransferase 3 (198 aa).

4 helical membrane-spanning segments follow: residues 4–24, 71–91, 113–133, and 147–167; these read TYLL…LVVG, LPMV…AVLG, LLCY…TLLF, and VVAV…AMCL.

Belongs to the PlsY family. As to quaternary structure, probably interacts with PlsX.

It localises to the cell membrane. The enzyme catalyses an acyl phosphate + sn-glycerol 3-phosphate = a 1-acyl-sn-glycero-3-phosphate + phosphate. The protein operates within lipid metabolism; phospholipid metabolism. In terms of biological role, catalyzes the transfer of an acyl group from acyl-phosphate (acyl-PO(4)) to glycerol-3-phosphate (G3P) to form lysophosphatidic acid (LPA). This enzyme utilizes acyl-phosphate as fatty acyl donor, but not acyl-CoA or acyl-ACP. This Bacillus anthracis protein is Glycerol-3-phosphate acyltransferase 3.